We begin with the raw amino-acid sequence, 236 residues long: Bacterial rhodopsin CSR3 (236 aa).

At 1 to 3 (MDA) the chain is on the extracellular side. The chain crosses the membrane as a helical span at residues 4–25 (VAVVYGITAAGFAVGVAIVGYL). Over 26–34 (YASLEGSEE) the chain is Cytoplasmic. Residues 35 to 56 (RSILAALALIPGFAGISYVAMA) traverse the membrane as a helical segment. The Extracellular portion of the chain corresponds to 57 to 70 (FGIGTVTIGETTLV). The chain crosses the membrane as a helical span at residues 71-92 (GFRYLDWVVTTPLLVGFVGYAA). The Cytoplasmic segment spans residues 93–95 (GAS). Residues 96 to 118 (RRAIFGVMVADALMILTGVGAVV) form a helical membrane-spanning segment. At 119-122 (ADGT) the chain is on the extracellular side. A helical transmembrane segment spans residues 123–150 (LKWVLFGVSTVFHVSLFAYLYLVFPRSV). The Cytoplasmic segment spans residues 151–153 (PDD). Residues 154 to 181 (PQRIGLFSLLKNHIGLLWIAYPLVWLAG) traverse the membrane as a helical segment. The Extracellular portion of the chain corresponds to 182-189 (PEGLGLAT). The helical transmembrane segment at 190–222 (YVGVSITYAFLDLLAKVPYVYFFYARRQVFATK) threads the bilayer. An N6-(retinylidene)lysine modification is found at Lys-205. At 223–236 (LLRDSGEVTATPAD) the chain is on the cytoplasmic side.

It belongs to the archaeal/bacterial/fungal opsin family.

Its subcellular location is the cell membrane. This Haloarcula vallismortis (Halobacterium vallismortis) protein is Bacterial rhodopsin CSR3.